The following is a 294-amino-acid chain: UDP-3-O-acyl-N-acetylglucosamine deacetylase (294 aa).

Zn(2+)-binding residues include His75, His232, and Asp236. The active-site Proton donor is His259.

This sequence belongs to the LpxC family. Zn(2+) is required as a cofactor.

The catalysed reaction is a UDP-3-O-[(3R)-3-hydroxyacyl]-N-acetyl-alpha-D-glucosamine + H2O = a UDP-3-O-[(3R)-3-hydroxyacyl]-alpha-D-glucosamine + acetate. The protein operates within glycolipid biosynthesis; lipid IV(A) biosynthesis; lipid IV(A) from (3R)-3-hydroxytetradecanoyl-[acyl-carrier-protein] and UDP-N-acetyl-alpha-D-glucosamine: step 2/6. In terms of biological role, catalyzes the hydrolysis of UDP-3-O-myristoyl-N-acetylglucosamine to form UDP-3-O-myristoylglucosamine and acetate, the committed step in lipid A biosynthesis. This is UDP-3-O-acyl-N-acetylglucosamine deacetylase from Sulfurovum sp. (strain NBC37-1).